Reading from the N-terminus, the 199-residue chain is Pathogenesis-related 5 protein Cup a 3 (199 aa).

8 cysteine pairs are disulfide-bonded: Cys-9–Cys-198, Cys-50–Cys-60, Cys-65–Cys-71, Cys-113–Cys-187, Cys-118–Cys-171, Cys-126–Cys-136, Cys-140–Cys-149, and Cys-150–Cys-158.

It belongs to the thaumatin family. In terms of tissue distribution, expressed in pollen.

The protein localises to the secreted. It localises to the extracellular space. It is found in the extracellular matrix. Its subcellular location is the pollen coat. The protein resides in the cytoplasm. The protein localises to the nucleus. It localises to the mitochondrion. It is found in the endoplasmic reticulum. Its subcellular location is the golgi apparatus. The protein resides in the golgi stack. The protein localises to the vesicle. It localises to the vacuole. This chain is Pathogenesis-related 5 protein Cup a 3, found in Hesperocyparis arizonica (Arizona cypress).